We begin with the raw amino-acid sequence, 155 residues long: Protein SREK1IP1 (155 aa).

The CCHC-type zinc finger occupies 13–30; the sequence is AGCKKCGYPGHLTFECRN. Residues 44 to 155 form a disordered region; the sequence is VSSTSSEDSD…TPNSSEFSRK (112 aa). Ser52 carries the phosphoserine modification. A compositionally biased stretch (basic and acidic residues) spans 66–84; that stretch reads QEKRINEEEEKKKEKSKEK. Residues 85–94 are compositionally biased toward basic residues; sequence IKLKKKRKRS. 2 positions are modified to phosphoserine: Ser96 and Ser97. The span at 107–142 shows a compositional bias: basic residues; that stretch reads QKKQKYQKKEKKKEKKSKSKKGKHHKKEKKKRKKEK. Phosphothreonine is present on Thr146. A compositionally biased stretch (polar residues) spans 146–155; sequence TPNSSEFSRK.

As to quaternary structure, interacts with SREK1/SFRS12.

Functionally, possible splicing regulator involved in the control of cellular survival. This chain is Protein SREK1IP1 (SREK1IP1), found in Homo sapiens (Human).